A 411-amino-acid chain; its full sequence is LL-diaminopimelate aminotransferase (411 aa).

Tyr-15 and Gly-42 together coordinate substrate. Residues Tyr-72, 108 to 109, Tyr-132, Asn-187, Tyr-218, and 246 to 248 each bind pyridoxal 5'-phosphate; these read SK and SFS. The substrate site is built by Lys-109, Tyr-132, and Asn-187. N6-(pyridoxal phosphate)lysine is present on Lys-249. Pyridoxal 5'-phosphate is bound by residues Arg-257 and Asn-292. Residues Asn-292 and Arg-388 each coordinate substrate.

Belongs to the class-I pyridoxal-phosphate-dependent aminotransferase family. LL-diaminopimelate aminotransferase subfamily. As to quaternary structure, homodimer. It depends on pyridoxal 5'-phosphate as a cofactor.

The catalysed reaction is (2S,6S)-2,6-diaminopimelate + 2-oxoglutarate = (S)-2,3,4,5-tetrahydrodipicolinate + L-glutamate + H2O + H(+). It functions in the pathway amino-acid biosynthesis; L-lysine biosynthesis via DAP pathway; LL-2,6-diaminopimelate from (S)-tetrahydrodipicolinate (aminotransferase route): step 1/1. Functionally, involved in the synthesis of meso-diaminopimelate (m-DAP or DL-DAP), required for both lysine and peptidoglycan biosynthesis. Catalyzes the direct conversion of tetrahydrodipicolinate to LL-diaminopimelate. This is LL-diaminopimelate aminotransferase from Gloeothece citriformis (strain PCC 7424) (Cyanothece sp. (strain PCC 7424)).